We begin with the raw amino-acid sequence, 347 residues long: uncharacterized protein (347 aa).

Asp207, Asp218, His279, Glu312, and Glu326 together coordinate Mn(2+).

This sequence belongs to the peptidase M24B family. It depends on Mn(2+) as a cofactor.

This is an uncharacterized protein from Methanocaldococcus jannaschii (strain ATCC 43067 / DSM 2661 / JAL-1 / JCM 10045 / NBRC 100440) (Methanococcus jannaschii).